We begin with the raw amino-acid sequence, 246 residues long: Metallo-beta-lactamase IMP-1 (246 aa).

An N-terminal signal peptide occupies residues 1–18; it reads MSKLSVFFIFLFCSIATA. Histidine 95, histidine 97, aspartate 99, histidine 157, and cysteine 176 together coordinate Zn(2+). The a beta-lactam site is built by lysine 179 and asparagine 185. Histidine 215 serves as a coordination point for Zn(2+).

It belongs to the metallo-beta-lactamase superfamily. Class-B beta-lactamase family. As to quaternary structure, monomer. Zn(2+) serves as cofactor.

Its subcellular location is the periplasm. The catalysed reaction is a beta-lactam + H2O = a substituted beta-amino acid. Inhibited by captopril stereoisomers, Hg(2+), Fe(2+), Cu(2+), chelating agents such as EDTA, dansyl derivatives, including dansyl-C4SH, bisthiazolidines, mercaptoacetic acid and by PMPC phosphonates. Inhibited by 3-(3-mercaptopropionylsulfanyl)-propionic acid pentafluorophenyl ester, via a covalent binding to Lys-179. Not susceptible to inactivation by the beta-lactamase-blocking agents clavulanic acid or cloxacillin. Functionally, class B beta-lactamase which confers resistance to the beta-lactam antibiotics, including penicillins, cephalosporins and carbapenems. Acts via hydrolysis of the beta-lactam ring. Has penicillin-, cephalosporin- and carbapenem-hydrolyzing activities. Has endoribonuclease activity, cleaving substrate RNAs preferentially between U/C and A, in vitro. In Serratia marcescens, this protein is Metallo-beta-lactamase IMP-1.